The following is a 706-amino-acid chain: MEKPRGVEETPSSEPMEEEEEDDDLELFGGYDSFRSYNSSAGSESSSYLEESSEAEHEDREAGELPTSPLHLLSPGTPRSLDGSGSEPAVCEMCGIVGTREAFFSKTKRFCSVSCSRSYSSNSKKASILARLQGKPPTKKAKVLHKAAWSAKIGAFLHSQGTGQLADGTPTGQDALVLGFDWGKFLKDHSYKAAPVSCFKHVPLYDQWEDVMKGMKVEVLNSDAVLPSRVYWIASVIQAAGYRVLLRYEGFENDASHDFWCNLGTVDVHPIGWCAINSKILVPPRTIHAKFTDWKGYLMKRLVGSRTLPVDFHIKMVESMKYPFRQGMRLEVVDKSQVSRTRMAVVDTVIGGRLRLLYEDGDSDDDFWCHMWSPLIHPVGWSRRVGHGIKLSERRSDMAHHPTFRKIYCDAVPYLFKKVRAVYTEGGWFEEGMKLEAIDPLNLGNICVATICKVLLDGYLMICVDGGPSTDGSDWFCYHASSHAIFPANFCQKNDIELTPPKGYEAHTFSWEAYLEKTKAKAAPSRLFNMDCPNHGFKVGMKLEAVDLMEPRLICVATVKRVVHRLLSIHFDGWDSEYDQWVDCESPDIYPVGWCELTGYQLQPPVATEPTTPLKAKEATKKKKKQFGKKRKRIPPAKTRPLRQGSKKALLEEDLQAAAKAPSEPAPDEIITVRVKEEHLDVATADKALSPELPVPVENIKQETDD.

The interval 1–85 (MEKPRGVEET…GTPRSLDGSG (85 aa)) is disordered. S13 is modified (phosphoserine). Acidic residues predominate over residues 15 to 26 (PMEEEEEDDDLE). The segment covering 39–50 (SSAGSESSSYLE) has biased composition (low complexity). Residues 54-63 (EAEHEDREAG) are compositionally biased toward basic and acidic residues. The residue at position 68 (S68) is a Phosphoserine. A Phosphothreonine modification is found at T77. Residues 82 to 117 (DGSGSEPAVCEMCGIVGTREAFFSKTKRFCSVSCSR) form an FCS-type zinc finger. Zn(2+)-binding residues include C91, C94, C111, and C115. MBT repeat units follow at residues 180–284 (FDWG…LVPP), 292–392 (TDWK…IKLS), 398–501 (MAHH…LTPP), and 509–605 (FSWE…LQPP). S339 bears the Phosphoserine mark. Residue K406 forms a Glycyl lysine isopeptide (Lys-Gly) (interchain with G-Cter in SUMO2) linkage. The tract at residues 606–669 (VATEPTTPLK…KAPSEPAPDE (64 aa)) is disordered. Over residues 620–635 (TKKKKKQFGKKRKRIP) the composition is skewed to basic residues. Glycyl lysine isopeptide (Lys-Gly) (interchain with G-Cter in SUMO2) cross-links involve residues K648, K660, and K676. Residues 685–706 (ADKALSPELPVPVENIKQETDD) form a disordered region. Position 690 is a phosphoserine (S690). A Glycyl lysine isopeptide (Lys-Gly) (interchain with G-Cter in SUMO1); alternate cross-link involves residue K701. K701 is covalently cross-linked (Glycyl lysine isopeptide (Lys-Gly) (interchain with G-Cter in SUMO2); alternate).

In terms of assembly, part of the E2F6.com-1 complex in G0 phase composed of E2F6, MGA, MAX, TFDP1, CBX3, BAT8, EUHMTASE1, RING1, RNF2, MBLR, BAT8 and YAF2.

The protein localises to the nucleus. Its function is as follows. Putative Polycomb group (PcG) protein. PcG proteins maintain the transcriptionally repressive state of genes, probably via a modification of chromatin, rendering it heritably changed in its expressibility. Its association with a chromatin-remodeling complex suggests that it may contribute to prevent expression of genes that trigger the cell into mitosis. Binds to monomethylated and dimethylated 'Lys-20' on histone H4. Binds histone H3 peptides that are monomethylated or dimethylated on 'Lys-4', 'Lys-9' or 'Lys-27'. This is Lethal(3)malignant brain tumor-like protein 2 (L3MBTL2) from Bos taurus (Bovine).